The primary structure comprises 201 residues: Imidazoleglycerol-phosphate dehydratase (201 aa).

The protein belongs to the imidazoleglycerol-phosphate dehydratase family.

It is found in the cytoplasm. The enzyme catalyses D-erythro-1-(imidazol-4-yl)glycerol 3-phosphate = 3-(imidazol-4-yl)-2-oxopropyl phosphate + H2O. It participates in amino-acid biosynthesis; L-histidine biosynthesis; L-histidine from 5-phospho-alpha-D-ribose 1-diphosphate: step 6/9. The sequence is that of Imidazoleglycerol-phosphate dehydratase from Prochlorococcus marinus subsp. pastoris (strain CCMP1986 / NIES-2087 / MED4).